The primary structure comprises 574 residues: Transmembrane protein 108 (574 aa).

Residues 9 to 29 form a helical membrane-spanning segment; the sequence is YCQLLSFLLTLALTKALVLAV. The interval 31–169 is interaction with SH3GL2; the sequence is EPSPRESLQT…ATTRRPPRPP (139 aa). 2 disordered regions span residues 32 to 352 and 364 to 417; these read PSPR…SGVF and DATV…PRPL. Polar residues predominate over residues 58-86; that stretch reads TRLSSVLTLNPTPDGPSSQAAATLETTVS. Low complexity predominate over residues 132–160; that stretch reads LPPGDATPTTTLPTKPAGTTSRPTVAPRA. The tract at residues 173–406 is interaction with DST (isoform 1); sequence RKGAGGSTRT…SPAEEEAEAS (234 aa). Residues 245-271 show a composition bias toward polar residues; sequence FSSTQPQTVSPATAPRSTSRVPPTTSL. Positions 292–312 are enriched in low complexity; the sequence is TSPGGEPAATAATGAPASTQP. Over residues 316 to 332 the composition is skewed to polar residues; sequence PSQSPHGDVQDSASHSD. A helical transmembrane segment spans residues 468 to 488; that stretch reads IAWVIVAISVPISSCSVLLTV. The interval 489–574 is interaction with CYFIP2; the sequence is CCMRRKKKTA…FVGNDQVSEI (86 aa).

In terms of assembly, interacts with DST (isoform 1). Interacts with SH3GL2. Interacts (via N-terminus) with CYFIP1 and CYFIP2; the interactions associate TMEM108 with the WAVE1 complex. Glycosylated. Expressed in the nervous system tissues, such as hippocampus and spinal cord, is barely detectable in peripheral tissues such as heart, lung, liver, kidney and muscle. In brain, highly expressed in dentate gyrus neurons and expressed in cortex, olfactory bulb, ammon's horn, cerebellum, hypothalamus and striatum.

The protein localises to the membrane. It is found in the postsynaptic density. Its subcellular location is the endosome membrane. It localises to the cell projection. The protein resides in the axon. The protein localises to the dendrite. It is found in the early endosome. In terms of biological role, transmembrane protein required for proper cognitive functions. Involved in the development of dentate gyrus (DG) neuron circuitry, is necessary for AMPA receptors surface expression and proper excitatory postsynaptic currents of DG granule neurons. Regulates the organization and stability of the microtubule network of sensory neurons to allow axonal transport. Through the interaction with DST, mediates the docking of the dynein/dynactin motor complex to vesicle cargos for retrograde axonal transport. In hippocampal neurons, required for BDNF-dependent dendrite outgrowth. Cooperates with SH3GL2 and recruits the WAVE1 complex to facilitate actin-dependent BDNF:NTRK2 early endocytic trafficking and mediate signaling from early endosomes. The sequence is that of Transmembrane protein 108 from Mus musculus (Mouse).